Consider the following 226-residue polypeptide: Ribonuclease 3 (226 aa).

One can recognise an RNase III domain in the interval I6 to D128. E41 is a Mg(2+) binding site. The active site involves D45. 2 residues coordinate Mg(2+): D114 and E117. The active site involves E117. One can recognise a DRBM domain in the interval D155–L225.

It belongs to the ribonuclease III family. As to quaternary structure, homodimer. Mg(2+) is required as a cofactor.

The protein resides in the cytoplasm. The enzyme catalyses Endonucleolytic cleavage to 5'-phosphomonoester.. Digests double-stranded RNA. Involved in the processing of primary rRNA transcript to yield the immediate precursors to the large and small rRNAs (23S and 16S). Processes some mRNAs, and tRNAs when they are encoded in the rRNA operon. Processes pre-crRNA and tracrRNA of type II CRISPR loci if present in the organism. This Yersinia enterocolitica serotype O:8 / biotype 1B (strain NCTC 13174 / 8081) protein is Ribonuclease 3.